Reading from the N-terminus, the 313-residue chain is Protein sprouty homolog 1 (313 aa).

Residue M1 is modified to N-acetylmethionine. A disordered region spans residues 43–152; sequence QIKAIRGSNE…RSDRVIRTQP (110 aa). Over residues 69 to 79 the composition is skewed to basic and acidic residues; that stretch reads PRPEKQERTHE. A compositionally biased stretch (low complexity) spans 106 to 125; it reads SRSTSTGSAASSGSSSSVSS. Residues 177–289 form the SPR domain; it reads QCGKCKCGEC…CYDWTHRPGC (113 aa).

The protein belongs to the sprouty family. As to quaternary structure, forms heterodimers with SPRY2. Interacts with TESK1. Interacts with CAV1 (via C-terminus).

It localises to the cytoplasm. The protein localises to the membrane. Its function is as follows. Inhibits fibroblast growth factor (FGF)-induced retinal lens fiber differentiation, probably by inhibiting FGF-mediated phosphorylation of ERK1/2. Inhibits TGFB-induced epithelial-to-mesenchymal transition in lens epithelial cells. This is Protein sprouty homolog 1 (Spry1) from Mus musculus (Mouse).